The primary structure comprises 324 residues: NADH-ubiquinone oxidoreductase chain 1 (324 aa).

The next 9 helical transmembrane spans lie at 9-29 (ILNP…LTLL), 43-63 (PNIV…KLFI), 75-95 (ILFI…WAPL), 106-126 (LAIL…LGSG), 146-166 (ISYE…TGGF), 177-197 (SIWL…STLA), 228-250 (LFFL…LFLG), 259-279 (ELTT…FLWV), and 299-319 (FLPL…TFAG).

Belongs to the complex I subunit 1 family.

It is found in the mitochondrion inner membrane. The enzyme catalyses a ubiquinone + NADH + 5 H(+)(in) = a ubiquinol + NAD(+) + 4 H(+)(out). In terms of biological role, core subunit of the mitochondrial membrane respiratory chain NADH dehydrogenase (Complex I) that is believed to belong to the minimal assembly required for catalysis. Complex I functions in the transfer of electrons from NADH to the respiratory chain. The immediate electron acceptor for the enzyme is believed to be ubiquinone. The sequence is that of NADH-ubiquinone oxidoreductase chain 1 (MT-ND1) from Tetraodon nigroviridis (Spotted green pufferfish).